A 359-amino-acid chain; its full sequence is Protein RecA (359 aa).

73-80 (GPESSGKT) provides a ligand contact to ATP.

Belongs to the RecA family.

It localises to the cytoplasm. Functionally, can catalyze the hydrolysis of ATP in the presence of single-stranded DNA, the ATP-dependent uptake of single-stranded DNA by duplex DNA, and the ATP-dependent hybridization of homologous single-stranded DNAs. It interacts with LexA causing its activation and leading to its autocatalytic cleavage. This chain is Protein RecA, found in Desulfovibrio desulfuricans (strain ATCC 27774 / DSM 6949 / MB).